Reading from the N-terminus, the 850-residue chain is Pre-mRNA-splicing factor SYF1 (850 aa).

12 HAT repeats span residues 10–42 (GLLC…FKSS), 46–78 (CTFQ…VVLQ), 90–122 (SEIL…FLVE), 126–160 (YEIT…FADD), 208–247 (GDVK…LLVN), 408–442 (AALR…VYAS), 444–480 (NDVK…LFVK), 500–531 (GKFD…LLES), 574–609 (NFYE…KIIK), 612–653 (LNIE…QYEQ), 708–744 (NDHN…FETE), and 746–782 (MEFN…FELN).

This sequence belongs to the crooked-neck family. Associated with the spliceosome.

The protein localises to the nucleus. In terms of biological role, involved in pre-mRNA splicing and cell cycle progression. The sequence is that of Pre-mRNA-splicing factor SYF1 (SYF1) from Debaryomyces hansenii (strain ATCC 36239 / CBS 767 / BCRC 21394 / JCM 1990 / NBRC 0083 / IGC 2968) (Yeast).